Consider the following 365-residue polypeptide: Terpene cyclase DEP1 (365 aa).

8 helical membrane-spanning segments follow: residues 10-30 (LYLSALGVWGLWGYAYFNGMF), 82-102 (LLFFDINYAVACTNLWTLIES), 116-136 (AWAMVLCNANGAAIVLPIYLY), 158-178 (LPIITVVMLLQPLLIFAPAWF), 188-208 (ALIALFQVAPVIVLGLYVGIT), 233-253 (LILAGSVASAVHIYTLTGALF), 297-317 (LFSQWDWIVVCLTSVVYAQLL), and 338-358 (MIYLTIATVVLGPGGAGSFAL).

It belongs to the membrane-bound ascI terpene cyclase family.

It is found in the membrane. The protein operates within polyketide biosynthesis. Functionally, part of the gene cluster that mediates the biosynthesis of depudecin, a highly oxidized eleven-carbon linear polyketide that acts as a histone deacetylase (HDAC) inhibitor and makes a small contribution to pathogenesis. The reducing polyketide synthase DEP5 is the central enzyme in depudecin biosynthesis by yielding the backbone polyketide chain. The monooxygenases DEP2 and DEP4, as well as the uncharacterized protein DEP1, then act as tailoring enzymes to modify the intermediate polyketide chain into depudecin. In Fusarium langsethiae, this protein is Terpene cyclase DEP1.